Consider the following 451-residue polypeptide: Phosphoglucosamine mutase (451 aa).

Serine 102 acts as the Phosphoserine intermediate in catalysis. 4 residues coordinate Mg(2+): serine 102, aspartate 242, aspartate 244, and aspartate 246. Serine 102 bears the Phosphoserine mark.

It belongs to the phosphohexose mutase family. Mg(2+) is required as a cofactor. Post-translationally, activated by phosphorylation.

It carries out the reaction alpha-D-glucosamine 1-phosphate = D-glucosamine 6-phosphate. In terms of biological role, catalyzes the conversion of glucosamine-6-phosphate to glucosamine-1-phosphate. This is Phosphoglucosamine mutase from Staphylococcus aureus (strain Mu3 / ATCC 700698).